The chain runs to 351 residues: Methylthioribose-1-phosphate isomerase (351 aa).

Residues 51–53 (RGA), Arg94, and Gln199 contribute to the substrate site. The active-site Proton donor is Asp240. 250-251 (NK) is a binding site for substrate.

The protein belongs to the EIF-2B alpha/beta/delta subunits family. MtnA subfamily. Homodimer.

It catalyses the reaction 5-(methylsulfanyl)-alpha-D-ribose 1-phosphate = 5-(methylsulfanyl)-D-ribulose 1-phosphate. It functions in the pathway amino-acid biosynthesis; L-methionine biosynthesis via salvage pathway; L-methionine from S-methyl-5-thio-alpha-D-ribose 1-phosphate: step 1/6. Functionally, catalyzes the interconversion of methylthioribose-1-phosphate (MTR-1-P) into methylthioribulose-1-phosphate (MTRu-1-P). The sequence is that of Methylthioribose-1-phosphate isomerase from Bacillus thuringiensis subsp. konkukian (strain 97-27).